The chain runs to 645 residues: Leucine-rich repeat protein soc-2 homolog (645 aa).

Residues M1 to G19 show a composition bias toward low complexity. 2 disordered regions span residues M1–S67 and N83–D151. Composition is skewed to gly residues over residues G26 to S49 and G88 to G97. A compositionally biased stretch (low complexity) spans S98–G107. 20 LRR repeats span residues G165 to C186, H188 to L209, S211 to C232, Q234 to L255, S257 to L278, N280 to L301, N303 to C324, N326 to L347, S349 to K371, S372 to S393, G396 to Q417, N420 to R441, G444 to W465, N467 to L488, N490 to L511, R513 to L534, E536 to L557, N559 to L580, S582 to C604, and N606 to G627.

This sequence belongs to the SHOC2 family.

Functionally, acts as a Ras effector and participates in MAPK pathway activation. Probably acts as a regulatory subunit of protein phosphatase that specifically dephosphorylates Raf kinase and stimulate Raf activity at specialized signaling complexes upon Ras activation. This is Leucine-rich repeat protein soc-2 homolog (Sur-8) from Drosophila yakuba (Fruit fly).